We begin with the raw amino-acid sequence, 500 residues long: Putative (R)-citramalate synthase CimA (500 aa).

The Pyruvate carboxyltransferase domain occupies 9–258 (LRFFDTTLRD…DTRIRTERLY (250 aa)).

This sequence belongs to the alpha-IPM synthase/homocitrate synthase family. Homodimer.

The catalysed reaction is pyruvate + acetyl-CoA + H2O = (3R)-citramalate + CoA + H(+). Its pathway is amino-acid biosynthesis; L-isoleucine biosynthesis; 2-oxobutanoate from pyruvate: step 1/3. Functionally, catalyzes the condensation of pyruvate and acetyl-coenzyme A to form (R)-citramalate. The polypeptide is Putative (R)-citramalate synthase CimA (Methanosphaerula palustris (strain ATCC BAA-1556 / DSM 19958 / E1-9c)).